The following is a 393-amino-acid chain: MANIDNKEQTELDQQDMEDVEDIEEEEAGEDANSKARQLTAQMMQNPQVLAALQERLDDLVGTPTGYIESLPKVVKRRVNALKNLQVKCAQIEAKFYEEVHELERKYAALYQPLFDKRSDIINATYEPTEEECEWKVDEEEDISGDLKDKAKLEEEKKDEEKEDPKGIPEFWLTVFKNVDLLSDMVQEHDEPILKHLKDIKVKFSEAGQPMSFTLEFHFEPNDFFTNEVLTKTYKMRSEPDESDPFSFDGPEIMGCTGCLIDWKKGKNVTLKTIKKKQKHKGRGTVRTVTKTVPNDSFFNFFSPPEVPENGELDDDAEAILTADFEIGHFLRERIIPRSVLYFTGEAIEDDDDDYDEEGEEADDEEGEEEADEDNDPDYEPKKDQNPAECKQQ.

The span at 1–10 (MANIDNKEQT) shows a compositional bias: basic and acidic residues. 2 disordered regions span residues 1 to 36 (MANI…NSKA) and 132 to 165 (ECEW…KEDP). Composition is skewed to acidic residues over residues 11–30 (ELDQ…EAGE) and 132–144 (ECEW…EDIS). Positions 126 to 151 (YEPTEEECEWKVDEEEDISGDLKDKA) match the NAP1L motif motif. Over residues 145–165 (GDLKDKAKLEEEKKDEEKEDP) the composition is skewed to basic and acidic residues. The Nuclear localization signal signature appears at 274-280 (IKKKQKH). The segment covering 347–378 (AIEDDDDDYDEEGEEADDEEGEEEADEDNDPD) has biased composition (acidic residues). The disordered stretch occupies residues 347–393 (AIEDDDDDYDEEGEEADDEEGEEEADEDNDPDYEPKKDQNPAECKQQ). Residues 379–393 (YEPKKDQNPAECKQQ) are compositionally biased toward basic and acidic residues.

It belongs to the nucleosome assembly protein (NAP) family. In terms of assembly, forms homomultimers. Interacts with histone B4. Interacts with the B-type cyclins ccnb1 and ccnb2. In terms of processing, phosphorylated by cyclin B-cdc2 kinase complexes.

It is found in the cytoplasm. The protein resides in the nucleus. In terms of biological role, acts as a chaperone for the linker histone to facilitate deposition of histone B4 onto linker DNA. Required for both remodeling of sperm chromatin into nucleosomes, and linker histone binding to nucleosome core dimers. Plays a role in tissue-specific gene regulation. Required for primitive hemopoiesis, acting upstream of tal1/scl. In Xenopus tropicalis (Western clawed frog), this protein is Nucleosome assembly protein 1-like 1.